Reading from the N-terminus, the 147-residue chain is Hemoglobin subunit beta-2 (147 aa).

The residue at position 2 (Val-2) is an N-acetylvaline. Residues 3-147 (HLTDAEKATV…VASALAHKYH (145 aa)) form the Globin domain. Ser-13 is subject to Phosphoserine. Lys-18 bears the N6-succinyllysine mark. A phosphoserine mark is found at Ser-51 and Ser-53. Heme b contacts are provided by His-64 and His-93. Asymmetric dimethylarginine is present on Arg-105. A Phosphothreonine modification is found at Thr-124. Residue Cys-126 is modified to Phosphoserine; in variant Ser-126.

This sequence belongs to the globin family. As to quaternary structure, heterotetramer of two alpha chains and two beta chains. In terms of tissue distribution, red blood cells.

Involved in oxygen transport from the lung to the various peripheral tissues. The sequence is that of Hemoglobin subunit beta-2 from Rattus norvegicus (Rat).